A 387-amino-acid chain; its full sequence is Short-chain dehydrogenase/reductase family 42E member 1 (387 aa).

Tyrosine 149 (proton acceptor) is an active-site residue. Residue lysine 153 coordinates NAD(+). 2 helical membrane-spanning segments follow: residues 279 to 299 (LPISMIYFFAFLTEMVHFVVG) and 365 to 385 (ILDVFVVVAFVAVLLSCLPVV).

This sequence belongs to the 3-beta-HSD family.

Its subcellular location is the membrane. The chain is Short-chain dehydrogenase/reductase family 42E member 1 (sdr42e1) from Danio rerio (Zebrafish).